Here is a 1507-residue protein sequence, read N- to C-terminus: Transient receptor potential cation channel subfamily M member 2 (1507 aa).

Basic and acidic residues predominate over residues 1 to 11 (MEPLDQRRTDS). The interval 1 to 24 (MEPLDQRRTDSDQEEGFGVQSRRA) is disordered. Residues 1-751 (MEPLDQRRTD…WWGQLCVDNG (751 aa)) are Cytoplasmic-facing. Threonine 173, asparagine 178, arginine 301, glycine 332, and threonine 335 together coordinate ADP-D-ribose. Position 739 is a phosphothreonine (threonine 739). Residues 752 to 768 (LWRIILCMLAFPLLFTG) lie within the membrane without spanning it. At 769 to 793 (FISFREKRLQALCRLARVRAFFNAP) the chain is on the cytoplasmic side. A helical membrane pass occupies residues 794-814 (VVIFYLNILSYFAFLCLFAYV). At 815-825 (LMVDFQPSPSW) the chain is on the extracellular side. A helical membrane pass occupies residues 826–846 (CEYLIYLWLFSLVCEETRQLF). Ca(2+) contacts are provided by glutamate 841 and glutamine 844. Topologically, residues 847–865 (YDPDGCGLMKMASLYFSDF) are cytoplasmic. The helical transmembrane segment at 866–886 (WNKLDVGAILLFIAGLTCRLI) threads the bilayer. Residue asparagine 867 participates in Ca(2+) binding. Over 887–894 (PATLYPGR) the chain is Extracellular. Residues 895 to 915 (IILSLDFIMFCLRLMHIFTIS) traverse the membrane as a helical segment. Residues 916–927 (KTLGPKIIIVKR) are Cytoplasmic-facing. Residues 928-948 (MMKDVFFFLFLLAVWVVSFGV) form a helical membrane-spanning segment. The Extracellular portion of the chain corresponds to 949-968 (AKQAILIHNESRVDWIFRGV). The pore-forming intramembrane region spans 969–983 (IYHSYLTIFGQIPTY). The short motif at 977-980 (FGQI) is the Selectivity filter element. The Extracellular portion of the chain corresponds to 984–1020 (IDGVNFSMDQCSPNGTDPYKPKCPESDWTGQAPAFPE). Cysteine 994 and cysteine 1006 are joined by a disulfide. The chain crosses the membrane as a helical span at residues 1021–1042 (WLTVTLLCLYLLFANILLLNLL). At 1043–1077 (IAMFNYTFQEVQEHTDQIWKFQRHDLIEEYHGRPP) the chain is on the cytoplasmic side. Glutamate 1071 contributes to the Ca(2+) binding site. An intramembrane segment occupies 1078–1096 (APPPLILLSHLQLLIKRIV). At 1097–1507 (LKIPAKRHKQ…KVASLFGAHF (411 aa)) the chain is on the cytoplasmic side. In terms of domain architecture, Nudix hydrolase spans 1351–1502 (RWKRNQGGGI…KKILQKVASL (152 aa)). Serine 1379 is a binding site for ADP-D-ribose. Residues 1387 to 1408 (GSREPGKMLPRKLKQVLQQEYW) carry the Nudix box motif. ADP-D-ribose contacts are provided by aspartate 1428, arginine 1430, tyrosine 1489, and asparagine 1491.

Belongs to the transient receptor (TC 1.A.4) family. LTrpC subfamily. TRPM2 sub-subfamily. In terms of assembly, homotetramer. In terms of processing, phosphorylation of TRPM2 at Thr-739 by protein kinase C (PKC) counteracts the effect of cytosolic Ca(2+) and elevates the temperature threshold. In terms of tissue distribution, detected in pancreas beta-cells. Detected in fetal brain cortex neurons (at protein level).

The protein localises to the cell membrane. It localises to the perikaryon. Its subcellular location is the cell projection. It is found in the cytoplasmic vesicle. The protein resides in the lysosome. The catalysed reaction is Ca(2+)(in) = Ca(2+)(out). It carries out the reaction Na(+)(in) = Na(+)(out). With respect to regulation, activated by intracellular ADP-ribose, beta-NAD (NAD(+)) and similar compounds, and by oxidative stress caused by reactive oxygen or nitrogen species. Ca(2+) and PI(4,5)P2 are required for channel opening by ADP-ribose. Activation by ADP-ribose and beta-NAD is strongly increased by moderate heat (35 to 40 degrees Celsius). Likewise, reactive oxygen species lower the threshold for activation by moderate heat (37 degrees Celsius). Activated by moderate heat (35 to 40 degrees Celsius). Inactivated by exposure to extracellular pH between 4.0 and 6.5; irreversibly inactivated when open channels are exposed to extracellular pH between 4.0 and 6.5, while pre-exposure of closed channels to extracellular pH 5.5 gives rise to currents that rapidly inactivate, but protects against irreversible inactivation. Inactivated by intracellular ATP. Activated by arachidonic acid. Inhibited by 2-aminoethyl diphenylborinate (2-APB). Its function is as follows. Nonselective, voltage-independent cation channel that mediates Na(+) and Ca(2+) influx, leading to increased cytoplasmic Ca(2+) levels. Functions as a ligand-gated ion channel gated by intracellular adenosine diphosphate ribose (ADP-ribose), Ca(2+), warm temperature, and oxidative stress. The precise physiological activators are under debate; the true, physiological activators may be ADP-ribose and ADP-ribose-2'-phosphate. Binding of ADP-ribose to the cytoplasmic Nudix domain causes a conformation change; the channel is primed but still requires Ca(2+) binding to trigger channel opening. Extracellular Ca(2+) passes through the channel and increases channel activity. Also contributes to Ca(2+) release from intracellular stores in response to ADP-ribose. Plays a role in numerous processes that involve signaling via intracellular Ca(2+) levels. Besides, mediates the release of lysosomal Zn(2+) stores in response to reactive oxygen species, leading to increased cytosolic Zn(2+) levels. Plays a role in insulin secretion, a process that requires increased cytoplasmic Ca(2+) levels. Required for normal IFNG and cytokine secretion and normal innate immune immunity in response to bacterial infection. Required for normal phagocytosis and cytokine release by macrophages exposed to zymosan (in vitro). Plays a role in dendritic cell differentiation and maturation, and in dendritic cell chemotaxis via its role in regulating cytoplasmic Ca(2+) levels. Plays a role in the regulation of the reorganization of the actin cytoskeleton and filopodia formation in response to reactive oxygen species via its function in increasing cytoplasmic Ca(2+) and Zn(2+) levels. Confers susceptibility to cell death following oxidative stress. This chain is Transient receptor potential cation channel subfamily M member 2, found in Rattus norvegicus (Rat).